A 378-amino-acid chain; its full sequence is MTAQTSAVSVISAANRLVAKVGSSLVTNEGRGLDRAAVGHWAAQIAALHQQGKQVVLVSSGAIAEGMARLGWRKRPSAMHELQAAAAVGQMGLCQAYEAAFAEFGLRTAQILLTHEDLADRHRYLNARSTLFALLRLGVVPIVNENDTVVTDEIRFGDNDTLGALVTNLIEADALIILTDQRGLYEADPRRDPAARFVAHAQAGDAALEAMAGGAGSGVGTGGMLTKILAAKRAAHSGAHTVIASGRERNVLTRLAQGECIGTELRAVLPVWSARKQWLADHLRLRGRVVLDDGAVHALLHEGKSLLPIGVAEVQGEFERGDVVACVDMHGRECARGLINYSSADTRRILRQPSSQIARILGSMTDPELMHRDNLVVT.

Position 20 (Lys-20) interacts with ATP. The substrate site is built by Ser-60, Asp-147, and Asn-159. ATP is bound by residues 179 to 180 and 221 to 227; these read TD and TGGMLTK. Residues 286-364 enclose the PUA domain; that stretch reads RGRVVLDDGA…SQIARILGSM (79 aa).

The protein belongs to the glutamate 5-kinase family.

The protein resides in the cytoplasm. The catalysed reaction is L-glutamate + ATP = L-glutamyl 5-phosphate + ADP. The protein operates within amino-acid biosynthesis; L-proline biosynthesis; L-glutamate 5-semialdehyde from L-glutamate: step 1/2. Catalyzes the transfer of a phosphate group to glutamate to form L-glutamate 5-phosphate. The protein is Glutamate 5-kinase of Bordetella pertussis (strain Tohama I / ATCC BAA-589 / NCTC 13251).